We begin with the raw amino-acid sequence, 55 residues long: Preprotein translocase subunit SecG (55 aa).

The Cytoplasmic portion of the chain corresponds to 1 to 29 (MAKKSGSGLQSSAGLMRYYEADKNAVQVQ). Residues 30 to 51 (PKVVLIVGAIVGIAVLFLSAVN) form a helical membrane-spanning segment. Residues 52–55 (GFWP) lie on the Extracellular side of the membrane.

Belongs to the SEC61-beta family. As to quaternary structure, component of the protein translocase complex. Heterotrimer consisting of alpha (SecY), beta (SecG) and gamma (SecE) subunits. Can form oligomers of the heterotrimer.

It localises to the cell membrane. In terms of biological role, involved in protein export. The function of the beta subunit is unknown, but it may be involved in stabilization of the trimeric complex. This Methanosarcina barkeri (strain Fusaro / DSM 804) protein is Preprotein translocase subunit SecG.